The primary structure comprises 133 residues: MSWTRVVVLSSLTTLLILTFSSVVKSAAVRDDSKAGDPKGAARHVFMPESDASNFFKHRSRRSPRYYSERQAEQRVRLSANERRREYNEEQRNEFENYVEEERDEQNERSREKNEQVREYHYDGLYPRYHWFH.

The N-terminal stretch at 1 to 26 (MSWTRVVVLSSLTTLLILTFSSVVKS) is a signal peptide. A propeptide spans 27 to 62 (AAVRDDSKAGDPKGAARHVFMPESDASNFFKHRSRR) (ucma-N). Residues 57-116 (KHRSRRSPRYYSERQAEQRVRLSANERRREYNEEQRNEFENYVEEERDEQNERSREKNEQ) form a disordered region. Positions 67-95 (YSERQAEQRVRLSANERRREYNEEQRNEF) are enriched in basic and acidic residues. A 4-carboxyglutamate mark is found at E69, E73, E82, E86, E89, E90, E94, E96, E100, E101, E102, E105, E108, E112, E115, and E119. Residues 88 to 121 (NEEQRNEFENYVEEERDEQNERSREKNEQVREYH) adopt a coiled-coil conformation. Positions 106–116 (QNERSREKNEQ) are enriched in basic and acidic residues.

This sequence belongs to the UCMA family. In terms of processing, proteolytically cleaved by a furin-like convertase to generate a persistent C-terminal fragment found in almost the entire cartilage matrix, and affecting osteoblast differentiation. Post-translationally, sulfated on tyrosine residues.

The protein localises to the secreted. Its subcellular location is the extracellular space. The protein resides in the extracellular matrix. In terms of biological role, may be involved in the negative control of osteogenic differentiation of osteochondrogenic precursor cells in peripheral zones of fetal cartilage and at the cartilage-bone interface. This chain is Unique cartilage matrix-associated protein (ucma), found in Dicentrarchus labrax (European seabass).